A 358-amino-acid chain; its full sequence is Uroporphyrinogen decarboxylase (358 aa).

Residues 27–31, D77, Y154, S209, and H330 contribute to the substrate site; that span reads RQAGR.

The protein belongs to the uroporphyrinogen decarboxylase family. In terms of assembly, homodimer.

The protein resides in the cytoplasm. It catalyses the reaction uroporphyrinogen III + 4 H(+) = coproporphyrinogen III + 4 CO2. Its pathway is porphyrin-containing compound metabolism; protoporphyrin-IX biosynthesis; coproporphyrinogen-III from 5-aminolevulinate: step 4/4. In terms of biological role, catalyzes the decarboxylation of four acetate groups of uroporphyrinogen-III to yield coproporphyrinogen-III. This chain is Uroporphyrinogen decarboxylase, found in Acinetobacter baylyi (strain ATCC 33305 / BD413 / ADP1).